The following is a 1033-amino-acid chain: NACHT, LRR and PYD domains-containing protein 3 (1033 aa).

The region spanning 1 to 91 is the Pyrin domain; sequence MTSVRCKLAQ…WEKAKKDQPE (91 aa). S3 is modified (phosphoserine). The cysteines at positions 6 and 104 are disulfide-linked. A Phosphotyrosine modification is found at Y11. A lipid anchor (S-palmitoyl cysteine) is attached at C126. Positions 127 to 130 are required for binding to phosphatidylinositol 4-phosphate (PtdIns4P); the sequence is KKKK. 3 positions are modified to phosphotyrosine; by BTK: Y132, Y136, and Y145. The FISNA domain maps to 136–206; sequence YRRHVRSRFY…SSLKLELLFE (71 aa). The residue at position 157 (S157) is a Phosphoserine. The residue at position 164 (Y164) is a Phosphotyrosine; by BTK. T165 serves as a coordination point for ATP. Residue S194 is modified to Phosphoserine; by MAPK8. Position 197 is a phosphoserine (S197). The NACHT domain occupies 216 to 532; the sequence is HTVVFQGAAG…EFFAAMYYLL (317 aa). Position 222–230 (222–230) interacts with ATP; the sequence is GAAGIGKTI. S261 is modified (phosphoserine). S291 carries the phosphoserine; by PKD/PRKD1 modification. K320 is covalently cross-linked (Glycyl lysine isopeptide (Lys-Gly) (interchain with G-Cter in ubiquitin)). S330 is modified (phosphoserine). The short motif at 351–355 is the KFERQ-like motif 1 element; it reads LEKLQ. A Glycyl lysine isopeptide (Lys-Gly) (interchain with G-Cter in ubiquitin) cross-link involves residue K426. H518 contacts ATP. The KFERQ-like motif 2 signature appears at 601–605; sequence QVRLE. A Glycyl lysine isopeptide (Lys-Gly) (interchain with G-Cter in ubiquitin) cross-link involves residue K687. 2 positions are modified to phosphoserine: S725 and S732. LRR repeat units follow at residues 739-759, 768-789, 796-816, 825-846, and 853-873; these read SLTE…RVLC, NIQR…DISS, KLVE…RLLC, NLQK…DLAL, and SLTR…QVLC. Positions 795 to 799 match the KFERQ-like motif 3 motif; sequence QKLVE. The residue at position 803 (S803) is a Phosphoserine; by CSNK1A1. 3 S-palmitoyl cysteine lipidation sites follow: C834, C835, and C841. At Y858 the chain carries Phosphotyrosine. A Glycyl lysine isopeptide (Lys-Gly) (interchain with G-Cter in ubiquitin) cross-link involves residue K875. LRR repeat units follow at residues 882–903, 910–930, 939–960, and 967–988; these read NLQK…ALTS, NFTH…RLLC, KLQM…NLST, and SLRK…TLCE. Residue C955 is the site of S-palmitoyl cysteine attachment. Residue K970 forms a Glycyl lysine isopeptide (Lys-Gly) (interchain with G-Cter in ubiquitin) linkage. The KFERQ-like motif 4 signature appears at 988-992; it reads EVLKQ. The residue at position 1032 (S1032) is a Phosphoserine.

The protein belongs to the NLRP family. As to quaternary structure, sensor component of NLRP3 inflammasomes; inflammasomes are supramolecular complexes that assemble in the cytosol in response to pathogens and other damage-associated signals and play critical roles in innate immunity and inflammation. The core of NLRP3 inflammasomes consists of a signal sensor component (NLRP3), an adapter (PYCARD/ASC), which recruits an effector pro-inflammatory caspase (CASP1 and, possibly, CASP4 and CASP5). Homodecamer; inactive NLRP3 forms homodecameric double-ring cages that hide pyrin domains within NACHT-LRR rings to avoid premature activation. Interacts (via pyrin domain) with PYCARD/ASC (via pyrin domain); interaction is direct. Interacts (via LRR repeat domain) with NEK7 (via N-terminus); the interaction is required for the formation of the complex NLRP3:PYCARD, oligomerization of PYCARD/ASC and activation of CASP1. Interacts (via LRR repeat domain) with NR4A1/Nur77 (via N-terminus); the interaction is direct, requires activation of NR4A1 by its ligands NBRE-containing dsDNA and lipopolysaccharide, and stimulates the association of NLRP3 with NEK7 for non-canonical NLRP3 inflammasome activation. Interacts with CARD8; leading to inhibit formation of the NLRP3 inflammasome. Interacts with MEFV; this interaction targets NLRP3 to degradation by autophagy, hence preventing excessive IL1B- and IL18-mediated inflammation. Interacts with EIF2AK2/PKR; this interaction requires EIF2AK2 activity, is accompanied by EIF2AK2 autophosphorylation and promotes inflammasome assembly in response to specific stimuli. Interacts with GBP5 (via DAPIN domain); this interaction promotes inflammasome assembly in response to microbial and soluble, but not crystalline, agents. Interacts with PML (isoform PML-1) (via the leucine-rich repeat (LRR) domain); PML-mediated increase in NLRP3 inflammasome activation does not depend upon this interaction. Interacts (via NACHT domain) with DHX33 (via DEAH box); NLRP3 activation in presence of cytosolic dsRNA is mediated by DHX33. Interacts (via NACHT and LRR domains) with ARRB2; this interaction is direct and inducible by polyunsaturated fatty acids (PUFAs). Interacts (via NACHT domain) with DDX3X under both LPS-primed and inflammasome-activating conditions. Interacts with IRF4 (via the LRR domain); this interaction is direct and is required for optimal IRF4 binding to IL4 promoter and efficient IL4 transactivation during differentiation of Th2 helper T-cells. Interacts with MAVS; promoting localization to mitochondria and activation of the NLRP3 inflammasome. Interacts with MARK4; promoting localization of NLRP3 to the microtubule organizing center (MTOC). Interacts with TRIM50; this interaction also promotes NLRP3 oligomerization and subsequent inflammasome activation. Interacts with IRGM; preventing NLRP3 inflammasome assembly and promoting NLRP3 degradation. Interacts (via KFERQ-like motifs) with HSPA8/HSC70; promoting NLRP3 degradation by the chaperone-mediated autophagy pathway. Interacts (via NACHT and LLR domains) with ABHD8; this interaction is enhanced in the presence of NLRP3 inflammasome inducers, such as ATP, nigericin, silica, or alum. Interaction with ABHD8 leads the recruitment of ZDHHC12, hence facilitating NLRP3 palmitoylation and degradation by the chaperone-mediated autophagy pathway (CMA), therefore attenuating NLRP3 inflammasome activation. In terms of processing, phosphorylation at Ser-194 by MAPK8/JNK1 increases inflammasome activation by promoting deubiquitination by BRCC3 and NLRP3 homooligomerization. Phosphorylation at Ser-803 by CSNK1A1 prevents inflammasome activation by preventing NEK7 recruitment. Phosphorylation at Ser-3 in the pyrin domain inhibits homomultimerization of NLRP3 and activation of the NLRP3 inflammasome: dephosphorylation by protein phosphatase 2A (PP2A) promotes assembly of the NLRP3 inflammasome. Phosphorylation at Ser-291 by PKD/PRKD1 promotes NLRP3 inflammasome assembly. Phosphorylation by ERK1/MAPK3 promotes NLRP3 inflammasome assembly. Phosphorylation by BTK (at Tyr-132, Tyr-136, Tyr-145 and Tyr-164) in the region that mediates binding to phosphatidylinositol phosphate, promotes relocalization of NLRP3 and assembly of the NLRP3 inflammasome. Phosphorylation at Tyr-858 inhibits NLRP3 inflammasome assembly: dephosphorylation by PTPN22 promotes inflammasome activation Phosphorylated by LATS1 and LATS2 at Ser-261 following palmitoylation by ZDHHC1, promoting its relocalization to the microtubule organizing center (MTOC), where NLRP3 is activated by NEK7, leading to inflammasome assembly and activation. Post-translationally, ubiquitinated; undergoes both 'Lys-48'- and 'Lys-63'-linked polyubiquitination. Ubiquitination does not lead to degradation, but inhibits inflammasome activation. Deubiquitination is catalyzed by BRCC3 and associated with NLRP3 activation and inflammasome assembly. This process can be induced by the activation of Toll-like receptors (by LPS), through a non-transcriptional pathway dependent on the mitochondrial production of reactive oxygen species, and by ATP. Ubiquitinated by TRIM31 via 'Lys-48'-linked ubiquitination, leading to its degradation by the proteasome. Ubiquitinated at Lys-687 by the SCF(FBXL2) complex, leading to its degradation by the proteasome. Ubiquitinated by TRIM35 via 'lys-48' and 'Lys-63'-linked ubiquitination leading to inhibition of NLRP3 inflammasome activation. Undergoes 'Lys-27'-linked polyubiquitination by MARCHF5, leading to NLRP3-NEK7 complex formation and NLRP3 oligomerization. The disulfide bond in the pyrin domain might play a role in reactive oxygen species-mediated activation. In terms of processing, palmitoylation by ZDHHC12 promotes NLRP3 degradation by the chaperone-mediated autophagy pathway (CMA) and therefore limits NLRP3 inflammasome activation. Interaction with ZDHHC12, and hence NLRP3 palmitoylation, is enhanced by ABHD8. Following palmitoylation, HSPA8/HSC70 recognizes and binds the KFERQ-like motifs on NLRP3 and promotes NLRP3 recruitment to lysosomes, where it is degraded via the chaperone-mediated autophagy pathway in a LAMP2-dependent process. Palmitoylation at Cys-834 and Cys-835 by ZDHHC5 enhances its binding to NEK7 leading to inflammasome assembly and activation. Palmitoylation at Cys-126 and Cys-955 by ZDHHC1 facilitates phosphorylation at Ser-261 by LATS1 and LATS2, promoting its relocalization to the microtubule organizing center (MTOC), where NLRP3 is activated by NEK7, leading to inflammasome assembly and activation. Depalmitoylated by ABHD17A. Post-translationally, degraded via selective autophagy following interaction with Irgm1. Irgm1 promotes NLRP3 recruitment to autophagosome membranes, promoting its SQSTM1/p62-dependent autophagy-dependent degradation. In terms of tissue distribution, expressed with high levels in peripheral blood leukocytes, including Th2 lymphocytes and macrophages. Expressed at low levels in resting osteoblasts (at protein level).

It is found in the cytoplasm. The protein localises to the cytosol. The protein resides in the inflammasome. It localises to the cytoskeleton. Its subcellular location is the microtubule organizing center. It is found in the golgi apparatus membrane. The protein localises to the endoplasmic reticulum. The protein resides in the mitochondrion. It localises to the secreted. Its subcellular location is the nucleus. It carries out the reaction ATP + H2O = ADP + phosphate + H(+). With respect to regulation, under resting conditions, NLRP3 binds ADP and is autoinhibited. Inactive NLRP3 forms homodecameric double-ring cages that hide pyrin domains within NACHT-LRR rings to avoid premature activation. NLRP3 activation stimuli include extracellular ATP, nigericin, reactive oxygen species, crystals of monosodium urate or cholesterol, amyloid-beta fibers, environmental or industrial particles and nanoparticles, such as asbestos, silica, aluminum salts, cytosolic dsRNA, etc. Almost all stimuli trigger intracellular K(+) efflux. These stimuli lead to membrane perturbations that induce activation of NLRP3. Upon activation, NLRP3 is transported to microtubule organizing center (MTOC), where it is unlocked by NEK7, leading to its relocalization to dispersed trans-Golgi network (dTGN) vesicle membranes and recruitment of PYCARD/ASC for the formation of an active inflammasome complex. NEK7-activated NLRP3 forms a disk-shaped inflammasome. NLRP3 and PYCARD/ASC interact via their respective pyrin domains; interaction initiates speck formation (nucleation) which greatly enhances further addition of soluble PYCARD/ASC molecules to the speck in a prion-like polymerization process. Clustered PYCARD/ASC nucleates the formation of CASP1 filaments through the interaction of their respective CARD domains, acting as a platform for CASP1 polymerization and activation. Active CASP1 then processes IL1B and IL18 precursors, leading to the release of mature cytokines in the extracellular milieu and inflammatory response. NLRP3 inflammasome assembly is inhibited by IRGM, which impedes NLRP3 oligomerization. NLRP3 inflammasome is inhibited by cyclic AMP (cAMP), which directly binds NLRP3; inhibition is relieved by calcium-sensing receptor CASR, which inhibits production of cAMP. Specifically inhibited by sulfonylurea MCC950 (also named CP-456,773, CRID3), a potent and specific small-molecule inhibitor of the NLRP3 inflammasome that acts by preventing ATP hydrolysis. Its function is as follows. Sensor component of the NLRP3 inflammasome, which mediates inflammasome activation in response to defects in membrane integrity, leading to secretion of inflammatory cytokines IL1B and IL18 and pyroptosis. In response to pathogens and other damage-associated signals that affect the integrity of membranes, initiates the formation of the inflammasome polymeric complex composed of NLRP3, CASP1 and PYCARD/ASC. Recruitment of pro-caspase-1 (proCASP1) to the NLRP3 inflammasome promotes caspase-1 (CASP1) activation, which subsequently cleaves and activates inflammatory cytokines IL1B and IL18 and gasdermin-D (GSDMD), promoting cytokine secretion and pyroptosis. Activation of NLRP3 inflammasome is also required for HMGB1 secretion; stimulating inflammatory responses. Under resting conditions, ADP-bound NLRP3 is autoinhibited. NLRP3 activation stimuli include extracellular ATP, nigericin, reactive oxygen species, crystals of monosodium urate or cholesterol, amyloid-beta fibers, environmental or industrial particles and nanoparticles, such as asbestos, silica, aluminum salts, cytosolic dsRNA, etc. Almost all stimuli trigger intracellular K(+) efflux. These stimuli lead to membrane perturbation and activation of NLRP3. Upon activation, NLRP3 is transported to microtubule organizing center (MTOC), where it is unlocked by NEK7, leading to its relocalization to dispersed trans-Golgi network (dTGN) vesicle membranes and formation of an active inflammasome complex. Associates with dTGN vesicle membranes by binding to phosphatidylinositol 4-phosphate (PtdIns4P). Shows ATPase activity. Functionally, independently of inflammasome activation, regulates the differentiation of T helper 2 (Th2) cells and has a role in Th2 cell-dependent asthma and tumor growth. During Th2 differentiation, required for optimal IRF4 binding to IL4 promoter and for IRF4-dependent IL4 transcription. Binds to the consensus DNA sequence 5'-GRRGGNRGAG-3'. May also participate in the transcription of IL5, IL13, GATA3, CCR3, CCR4 and MAF. The protein is NACHT, LRR and PYD domains-containing protein 3 of Mus musculus (Mouse).